A 63-amino-acid polypeptide reads, in one-letter code: Large ribosomal subunit protein uL29 (63 aa).

This sequence belongs to the universal ribosomal protein uL29 family.

The sequence is that of Large ribosomal subunit protein uL29 from Hahella chejuensis (strain KCTC 2396).